A 192-amino-acid chain; its full sequence is Nucleoside triphosphate pyrophosphatase (192 aa).

The Proton acceptor role is filled by Asp-73.

Belongs to the Maf family. A divalent metal cation serves as cofactor.

The protein localises to the cytoplasm. It catalyses the reaction a ribonucleoside 5'-triphosphate + H2O = a ribonucleoside 5'-phosphate + diphosphate + H(+). The enzyme catalyses a 2'-deoxyribonucleoside 5'-triphosphate + H2O = a 2'-deoxyribonucleoside 5'-phosphate + diphosphate + H(+). In terms of biological role, nucleoside triphosphate pyrophosphatase. May have a dual role in cell division arrest and in preventing the incorporation of modified nucleotides into cellular nucleic acids. The protein is Nucleoside triphosphate pyrophosphatase of Ehrlichia canis (strain Jake).